The following is a 490-amino-acid chain: Bifunctional protein HldE (490 aa).

The tract at residues 1 to 330 (MERKEIESLF…AEIGHAHPDS (330 aa)) is ribokinase. Residue 205–208 (NRKE) participates in ATP binding. The active site involves Asp275. A cytidylyltransferase region spans residues 356 to 490 (FTNGCFDLLH…EKIRTGSIKE (135 aa)).

In the N-terminal section; belongs to the carbohydrate kinase PfkB family. It in the C-terminal section; belongs to the cytidylyltransferase family. In terms of assembly, homodimer.

The enzyme catalyses D-glycero-beta-D-manno-heptose 7-phosphate + ATP = D-glycero-beta-D-manno-heptose 1,7-bisphosphate + ADP + H(+). The catalysed reaction is D-glycero-beta-D-manno-heptose 1-phosphate + ATP + H(+) = ADP-D-glycero-beta-D-manno-heptose + diphosphate. It functions in the pathway nucleotide-sugar biosynthesis; ADP-L-glycero-beta-D-manno-heptose biosynthesis; ADP-L-glycero-beta-D-manno-heptose from D-glycero-beta-D-manno-heptose 7-phosphate: step 1/4. Its pathway is nucleotide-sugar biosynthesis; ADP-L-glycero-beta-D-manno-heptose biosynthesis; ADP-L-glycero-beta-D-manno-heptose from D-glycero-beta-D-manno-heptose 7-phosphate: step 3/4. Catalyzes the phosphorylation of D-glycero-D-manno-heptose 7-phosphate at the C-1 position to selectively form D-glycero-beta-D-manno-heptose-1,7-bisphosphate. Its function is as follows. Catalyzes the ADP transfer from ATP to D-glycero-beta-D-manno-heptose 1-phosphate, yielding ADP-D-glycero-beta-D-manno-heptose. This is Bifunctional protein HldE from Geotalea uraniireducens (strain Rf4) (Geobacter uraniireducens).